The primary structure comprises 1001 residues: Phosphatidylinositol 4,5-bisphosphate 5-phosphatase A (1001 aa).

Polar residues predominate over residues 1–12 (MEGQSRSGSAKS). Disordered stretches follow at residues 1–130 (MEGQ…VASV) and 144–412 (SASA…QPTC). The RSXSXX motif 1 signature appears at 6-11 (RSGSAK). Over residues 13–28 (GTRTGLGPLPGTHGAL) the composition is skewed to low complexity. Positions 29–42 (QTGTPSKKVNSSFQ) are enriched in polar residues. Asymmetric dimethylarginine; alternate is present on Arg-56. The residue at position 56 (Arg-56) is an Omega-N-methylarginine; alternate. Arg-65 is subject to Omega-N-methylarginine. Residue Arg-76 is modified to Asymmetric dimethylarginine. Arg-83 carries the asymmetric dimethylarginine; alternate modification. Arg-83 carries the post-translational modification Omega-N-methylarginine; alternate. A compositionally biased stretch (polar residues) spans 161–174 (SPTSRDQKQLSPTS). Residue Ser-171 is modified to Phosphoserine. The span at 180 to 196 (ALATSGLSLALASQEQP) shows a compositional bias: low complexity. Residues 197–210 (PQSPSSPSPVPSPV) are compositionally biased toward pro residues. Over residues 284–294 (ARPEAPRHSPE) the composition is skewed to basic and acidic residues. Residues Ser-292 and Ser-325 each carry the phosphoserine modification. Residues 338–348 (VPPPLPKPPRS) show a composition bias toward pro residues. An SH3-binding motif is present at residues 346–351 (PRSPSR). Composition is skewed to low complexity over residues 349-361 (PSRS…NRSP) and 394-411 (SPVA…AQPT). The RSXSXX motif 2 motif lies at 351 to 356 (RSPSRS). The catalytic stretch occupies residues 420 to 723 (ITVVTWNVGT…SDHKPVAARF (304 aa)). The interval 724–835 (LLQFAFRDDV…IGVTEPFQIS (112 aa)) is required for ruffle localization. The segment at 837-1001 (PTSESASSST…LGLEDGGLGP (165 aa)) is disordered. Low complexity predominate over residues 838–853 (TSESASSSTDSSGTSS). 2 consecutive short sequence motifs (RSXSXX motif) follow at residues 869–874 (RSPSPG) and 880–885 (RSRSPG). Ser-898 bears the Phosphoserine mark. 2 stretches are compositionally biased toward low complexity: residues 905–917 (SRSP…QLPR) and 925–936 (SSGSRGSSEEGP). An RSXSXX motif 5 motif is present at residues 906 to 911 (RSPSPQ). Over residues 937 to 949 (SGPPGPWAFPPAV) the composition is skewed to pro residues. Ser-985 carries the post-translational modification Phosphoserine.

The protein belongs to the inositol 1,4,5-trisphosphate 5-phosphatase type II family. Phosphorylated on Ser/Thr residues. Expressed in heart, brain, kidney, stomach, small intestine and lung. Not expressed in spleen, thymus, skeletal muscle, testis and skin.

The protein resides in the cytoplasm. The catalysed reaction is 1D-myo-inositol 1,4,5-trisphosphate + H2O = 1D-myo-inositol 1,4-bisphosphate + phosphate. The enzyme catalyses 1D-myo-inositol 1,3,4,5-tetrakisphosphate + H2O = 1D-myo-inositol 1,3,4-trisphosphate + phosphate. It carries out the reaction a 1,2-diacyl-sn-glycero-3-phospho-(1D-myo-inositol-4,5-bisphosphate) + H2O = a 1,2-diacyl-sn-glycero-3-phospho-(1D-myo-inositol 4-phosphate) + phosphate. In terms of biological role, inositol 5-phosphatase, which converts inositol 1,4,5-trisphosphate to inositol 1,4-bisphosphate. Also converts phosphatidylinositol 4,5-bisphosphate to phosphatidylinositol 4-phosphate and inositol 1,3,4,5-tetrakisphosphate to inositol 1,3,4-trisphosphate in vitro. May be involved in modulation of the function of inositol and phosphatidylinositol polyphosphate-binding proteins that are present at membranes ruffles. The polypeptide is Phosphatidylinositol 4,5-bisphosphate 5-phosphatase A (Inpp5j) (Rattus norvegicus (Rat)).